We begin with the raw amino-acid sequence, 147 residues long: Transthyretin (147 aa).

The first 20 residues, 1–20 (MASHRLLLLCLAGLVFVSEA), serve as a signal peptide directing secretion. Cys30 is modified (sulfocysteine). L-thyroxine is bound at residue Lys35. At Ser72 the chain carries Phosphoserine. Residue Glu74 coordinates L-thyroxine. The N-linked (GlcNAc...) asparagine glycan is linked to Asn118. Residue Ser137 participates in L-thyroxine binding.

The protein belongs to the transthyretin family. In terms of assembly, homotetramer. Dimer of dimers. In the homotetramer, subunits assemble around a central channel that can accommodate two ligand molecules. Interacts with RBP4. In terms of processing, sulfonation of the reactive cysteine Cys-30 enhances the stability of the native conformation of TTR, avoiding misassembly of the protein leading to amyloid formation.

The protein resides in the secreted. Thyroid hormone-binding protein. Probably transports thyroxine from the bloodstream to the brain. This Macaca fascicularis (Crab-eating macaque) protein is Transthyretin (TTR).